We begin with the raw amino-acid sequence, 411 residues long: 4-coumarate--CoA ligase (411 aa).

It belongs to the ATP-dependent AMP-binding enzyme family.

It catalyses the reaction (E)-4-coumarate + ATP + CoA = (E)-4-coumaroyl-CoA + AMP + diphosphate. Converts p-coumaric acid into p-coumaryl CoA. This is necessary for the activation of the photoactive yellow protein (PYP) chromophore. The polypeptide is 4-coumarate--CoA ligase (pcl) (Cereibacter sphaeroides (strain ATCC 17023 / DSM 158 / JCM 6121 / CCUG 31486 / LMG 2827 / NBRC 12203 / NCIMB 8253 / ATH 2.4.1.) (Rhodobacter sphaeroides)).